The primary structure comprises 220 residues: Urease accessory protein UreF (220 aa).

It belongs to the UreF family. In terms of assembly, ureD, UreF and UreG form a complex that acts as a GTP-hydrolysis-dependent molecular chaperone, activating the urease apoprotein by helping to assemble the nickel containing metallocenter of UreC. The UreE protein probably delivers the nickel.

The protein resides in the cytoplasm. Its function is as follows. Required for maturation of urease via the functional incorporation of the urease nickel metallocenter. The protein is Urease accessory protein UreF of Bordetella parapertussis (strain 12822 / ATCC BAA-587 / NCTC 13253).